A 189-amino-acid chain; its full sequence is MVKVIASSVRKGNVLDVDGKLYVVLTAQNFHPGKGTPVTQVDMRRISDGVKVSERYRTTEQVERAFVEDREHTFLYEDAEGFHFMNPESYDQLVMSADDIGDLKAYLQEGMAVMLSIHEGIAIAIDLPRHVTLEITETEPVVKGQTASSSYKPALLSNGVRTSVPPHIQAGTRVVIATEDGSYVERAKD.

The protein belongs to the elongation factor P family.

Its subcellular location is the cytoplasm. It participates in protein biosynthesis; polypeptide chain elongation. Functionally, involved in peptide bond synthesis. Stimulates efficient translation and peptide-bond synthesis on native or reconstituted 70S ribosomes in vitro. Probably functions indirectly by altering the affinity of the ribosome for aminoacyl-tRNA, thus increasing their reactivity as acceptors for peptidyl transferase. This chain is Elongation factor P, found in Sinorhizobium fredii (strain NBRC 101917 / NGR234).